Consider the following 427-residue polypeptide: Tol-Pal system protein TolB (427 aa).

An N-terminal signal peptide occupies residues Met1–Ala23.

The protein belongs to the TolB family. In terms of assembly, the Tol-Pal system is composed of five core proteins: the inner membrane proteins TolA, TolQ and TolR, the periplasmic protein TolB and the outer membrane protein Pal. They form a network linking the inner and outer membranes and the peptidoglycan layer.

Its subcellular location is the periplasm. Its function is as follows. Part of the Tol-Pal system, which plays a role in outer membrane invagination during cell division and is important for maintaining outer membrane integrity. This chain is Tol-Pal system protein TolB, found in Haemophilus influenzae (strain PittGG).